A 123-amino-acid polypeptide reads, in one-letter code: Ribonuclease P protein component (123 aa).

This sequence belongs to the RnpA family. In terms of assembly, consists of a catalytic RNA component (M1 or rnpB) and a protein subunit.

The catalysed reaction is Endonucleolytic cleavage of RNA, removing 5'-extranucleotides from tRNA precursor.. Its function is as follows. RNaseP catalyzes the removal of the 5'-leader sequence from pre-tRNA to produce the mature 5'-terminus. It can also cleave other RNA substrates such as 4.5S RNA. The protein component plays an auxiliary but essential role in vivo by binding to the 5'-leader sequence and broadening the substrate specificity of the ribozyme. The protein is Ribonuclease P protein component of Bordetella petrii (strain ATCC BAA-461 / DSM 12804 / CCUG 43448).